The primary structure comprises 194 residues: Isopentenyl-diphosphate Delta-isomerase (194 aa).

H23 and H30 together coordinate Mn(2+). One can recognise a Nudix hydrolase domain in the interval 28–162; that stretch reads PLHLAFSCYV…TTDISPWCRQ (135 aa). The active site involves C65. Residue H67 coordinates Mn(2+). Residue E85 participates in Mg(2+) binding. 2 residues coordinate Mn(2+): E112 and E114. The active site involves E114.

It belongs to the IPP isomerase type 1 family. Mg(2+) serves as cofactor. Mn(2+) is required as a cofactor.

Its subcellular location is the cytoplasm. The catalysed reaction is isopentenyl diphosphate = dimethylallyl diphosphate. It functions in the pathway isoprenoid biosynthesis; dimethylallyl diphosphate biosynthesis; dimethylallyl diphosphate from isopentenyl diphosphate: step 1/1. Its function is as follows. Catalyzes the 1,3-allylic rearrangement of the homoallylic substrate isopentenyl (IPP) to its highly electrophilic allylic isomer, dimethylallyl diphosphate (DMAPP). This chain is Isopentenyl-diphosphate Delta-isomerase, found in Saccharopolyspora erythraea (strain ATCC 11635 / DSM 40517 / JCM 4748 / NBRC 13426 / NCIMB 8594 / NRRL 2338).